The primary structure comprises 108 residues: Nitrite reductase (NADH) small subunit (108 aa).

This sequence to B.subtilis NasE. In terms of assembly, associates with NirB.

Its subcellular location is the cytoplasm. The enzyme catalyses NH4(+) + 3 NAD(+) + 2 H2O = nitrite + 3 NADH + 5 H(+). In terms of biological role, required for activity of the reductase. This is Nitrite reductase (NADH) small subunit (nirD) from Escherichia coli O157:H7.